A 227-amino-acid chain; its full sequence is Endonuclease V (227 aa).

The Mg(2+) site is built by Asp-46 and Asp-114.

Belongs to the endonuclease V family. Requires Mg(2+) as cofactor.

It localises to the cytoplasm. It carries out the reaction Endonucleolytic cleavage at apurinic or apyrimidinic sites to products with a 5'-phosphate.. In terms of biological role, DNA repair enzyme involved in the repair of deaminated bases. Selectively cleaves double-stranded DNA at the second phosphodiester bond 3' to a deoxyinosine leaving behind the intact lesion on the nicked DNA. This is Endonuclease V from Alkalilimnicola ehrlichii (strain ATCC BAA-1101 / DSM 17681 / MLHE-1).